Consider the following 677-residue polypeptide: UvrABC system protein B (677 aa).

The 389-residue stretch at 24–412 (EGVLQGVPAQ…EGIVVEQVIR (389 aa)) folds into the Helicase ATP-binding domain. Residue 37–44 (GVTGSGKT) coordinates ATP. The Beta-hairpin motif lies at 90–113 (YYDYYQPEAYLPNSDTYIEKDLAI). In terms of domain architecture, Helicase C-terminal spans 429–591 (QIDDLMEEIQ…ITPQQIKKAR (163 aa)). A UVR domain is found at 636–671 (EKSIERTRKLMQEAAKKLEFIEAAQYRNELLKLEDL).

This sequence belongs to the UvrB family. In terms of assembly, forms a heterotetramer with UvrA during the search for lesions. Interacts with UvrC in an incision complex.

Its subcellular location is the cytoplasm. The UvrABC repair system catalyzes the recognition and processing of DNA lesions. A damage recognition complex composed of 2 UvrA and 2 UvrB subunits scans DNA for abnormalities. Upon binding of the UvrA(2)B(2) complex to a putative damaged site, the DNA wraps around one UvrB monomer. DNA wrap is dependent on ATP binding by UvrB and probably causes local melting of the DNA helix, facilitating insertion of UvrB beta-hairpin between the DNA strands. Then UvrB probes one DNA strand for the presence of a lesion. If a lesion is found the UvrA subunits dissociate and the UvrB-DNA preincision complex is formed. This complex is subsequently bound by UvrC and the second UvrB is released. If no lesion is found, the DNA wraps around the other UvrB subunit that will check the other stand for damage. This chain is UvrABC system protein B, found in Bacteroides thetaiotaomicron (strain ATCC 29148 / DSM 2079 / JCM 5827 / CCUG 10774 / NCTC 10582 / VPI-5482 / E50).